Here is a 603-residue protein sequence, read N- to C-terminus: MAKTVVSPDTIALPRTSESEQLKKIRHTTSHVMAMAVQKLFPKAQVTIGPWTETGFYYDFDVAEPFTEADLKAIKKEMVKIINKKLPVIREEISREEAKQRIESIQEPYKLEILDSIHEPITVYHLGDQWWDLCAGPHLESTADINPKAIALESVAGAYWRGDANKAQLQRIYGTAWETPEQLAEYQRRKEEALKRDHRKLGKELGLFIFADPVGPGLPLWTPKGTIIRTILEDFLKQEQIKRGYLPVVTPHIARVDLFKQSGHWQKYQEDMFPMMAESPEEAAQEMGFVLKPMNCPFHIQIYKSELRSYRDLPLRLAEFGTVYRYEQSGELGGLTRVRGFTVDDSHLFVTPDQLDEEFLSVVDLILTVFKSLQLKNFKARLSFRDPESDKYIGSDEAWEKAQGAIRRAVQELEMDYFEAPGEAAFYGPKLDFIFQDALEREWQLGTVQVDYNLPERFDLEYIAADGSRQRPVMIHRAPFGSLERLIGILIEEYAGDFPLWLAPIQVRLLAVSDEFLPFAQSIVQQMQSLGLRAEVDTSGDRLGKMIRNAEKQKIPVMAVIGAKEVEANALNIRTRASGELGEIPVTEVLEKLQATVTNHDTW.

A catalytic region spans residues 197 to 499 (DHRKLGKELG…LIEEYAGDFP (303 aa)). The Zn(2+) site is built by cysteine 296, histidine 347, and histidine 476.

Belongs to the class-II aminoacyl-tRNA synthetase family. As to quaternary structure, homodimer. Requires Zn(2+) as cofactor.

Its subcellular location is the cytoplasm. It carries out the reaction tRNA(Thr) + L-threonine + ATP = L-threonyl-tRNA(Thr) + AMP + diphosphate + H(+). Its function is as follows. Catalyzes the attachment of threonine to tRNA(Thr) in a two-step reaction: L-threonine is first activated by ATP to form Thr-AMP and then transferred to the acceptor end of tRNA(Thr). Also edits incorrectly charged L-seryl-tRNA(Thr). This is Threonine--tRNA ligase from Synechocystis sp. (strain ATCC 27184 / PCC 6803 / Kazusa).